The chain runs to 49 residues: Turripeptide OL47 (49 aa).

Positions 28–49 (RSDTEKKCTGGPDPCPPRQWPD) are disordered. Residues 40-49 (DPCPPRQWPD) show a composition bias toward pro residues.

In terms of processing, contains 4 disulfide bonds. Expressed by the venom duct.

The protein resides in the secreted. Its function is as follows. Acts as a neurotoxin by inhibiting an ion channel. This chain is Turripeptide OL47, found in Iotyrris olangoensis (Sea snail).